The sequence spans 192 residues: Xanthine phosphoribosyltransferase (192 aa).

Xanthine contacts are provided by L20 and N27. Position 128 to 132 (128 to 132 (ANGQA)) interacts with 5-phospho-alpha-D-ribose 1-diphosphate. K156 contributes to the xanthine binding site.

The protein belongs to the purine/pyrimidine phosphoribosyltransferase family. Xpt subfamily. Homodimer.

The protein localises to the cytoplasm. The catalysed reaction is XMP + diphosphate = xanthine + 5-phospho-alpha-D-ribose 1-diphosphate. Its pathway is purine metabolism; XMP biosynthesis via salvage pathway; XMP from xanthine: step 1/1. In terms of biological role, converts the preformed base xanthine, a product of nucleic acid breakdown, to xanthosine 5'-monophosphate (XMP), so it can be reused for RNA or DNA synthesis. The chain is Xanthine phosphoribosyltransferase from Listeria monocytogenes serotype 4b (strain F2365).